The following is a 237-amino-acid chain: Ribonuclease PH (237 aa).

Phosphate is bound by residues R86 and G124 to R126.

It belongs to the RNase PH family. Homohexameric ring arranged as a trimer of dimers.

The enzyme catalyses tRNA(n+1) + phosphate = tRNA(n) + a ribonucleoside 5'-diphosphate. Functionally, phosphorolytic 3'-5' exoribonuclease that plays an important role in tRNA 3'-end maturation. Removes nucleotide residues following the 3'-CCA terminus of tRNAs; can also add nucleotides to the ends of RNA molecules by using nucleoside diphosphates as substrates, but this may not be physiologically important. Probably plays a role in initiation of 16S rRNA degradation (leading to ribosome degradation) during starvation. This chain is Ribonuclease PH, found in Roseobacter denitrificans (strain ATCC 33942 / OCh 114) (Erythrobacter sp. (strain OCh 114)).